The sequence spans 385 residues: Succinate--CoA ligase [ADP-forming] subunit beta (385 aa).

Residues K9–R244 form the ATP-grasp domain. ATP contacts are provided by residues K46, G53 to G55, E99, C102, and E107. 2 residues coordinate Mg(2+): N199 and D213. Substrate is bound by residues N264 and G321–M323.

Belongs to the succinate/malate CoA ligase beta subunit family. Heterotetramer of two alpha and two beta subunits. Mg(2+) is required as a cofactor.

It catalyses the reaction succinate + ATP + CoA = succinyl-CoA + ADP + phosphate. It carries out the reaction GTP + succinate + CoA = succinyl-CoA + GDP + phosphate. It participates in carbohydrate metabolism; tricarboxylic acid cycle; succinate from succinyl-CoA (ligase route): step 1/1. Succinyl-CoA synthetase functions in the citric acid cycle (TCA), coupling the hydrolysis of succinyl-CoA to the synthesis of either ATP or GTP and thus represents the only step of substrate-level phosphorylation in the TCA. The beta subunit provides nucleotide specificity of the enzyme and binds the substrate succinate, while the binding sites for coenzyme A and phosphate are found in the alpha subunit. This Rickettsia bellii (strain OSU 85-389) protein is Succinate--CoA ligase [ADP-forming] subunit beta.